A 141-amino-acid chain; its full sequence is Large ribosomal subunit protein uL11 (141 aa).

This sequence belongs to the universal ribosomal protein uL11 family. Part of the ribosomal stalk of the 50S ribosomal subunit. Interacts with L10 and the large rRNA to form the base of the stalk. L10 forms an elongated spine to which L12 dimers bind in a sequential fashion forming a multimeric L10(L12)X complex. One or more lysine residues are methylated.

Its function is as follows. Forms part of the ribosomal stalk which helps the ribosome interact with GTP-bound translation factors. This is Large ribosomal subunit protein uL11 from Bacillus cereus (strain ATCC 10987 / NRS 248).